The sequence spans 202 residues: Peptidyl-tRNA hydrolase (202 aa).

Residue tyrosine 22 coordinates tRNA. Histidine 27 acts as the Proton acceptor in catalysis. TRNA-binding residues include phenylalanine 69, asparagine 71, and asparagine 117.

It belongs to the PTH family. As to quaternary structure, monomer.

Its subcellular location is the cytoplasm. It catalyses the reaction an N-acyl-L-alpha-aminoacyl-tRNA + H2O = an N-acyl-L-amino acid + a tRNA + H(+). Its function is as follows. Hydrolyzes ribosome-free peptidyl-tRNAs (with 1 or more amino acids incorporated), which drop off the ribosome during protein synthesis, or as a result of ribosome stalling. Catalyzes the release of premature peptidyl moieties from peptidyl-tRNA molecules trapped in stalled 50S ribosomal subunits, and thus maintains levels of free tRNAs and 50S ribosomes. This is Peptidyl-tRNA hydrolase from Thiobacillus denitrificans (strain ATCC 25259 / T1).